The sequence spans 404 residues: Sorting nexin-5 (404 aa).

At Ala-2 the chain carries N-acetylalanine. Positions 25 to 172 constitute a PX domain; it reads LNVDPSLQID…HVFLEYDQDL (148 aa). A 1,2-diacyl-sn-glycero-3-phospho-(1D-myo-inositol-4,5-bisphosphate)-binding positions include 40–46, 99–105, and 113–116; these read SERDKVK, FDGPREK, and EGSM. Residues 169-261 are interaction with DOCK1; the sequence is DQDLSVRRKN…HSLALEEPTV (93 aa). Residues 183 to 200 form a membrane-binding amphipathic helix region; it reads FGGFFKSVVKSADEVLFS. Ser-193 is subject to Phosphoserine. Positions 202 to 404 constitute a BAR domain; sequence VKEVDDFFEQ…QSCIDLFKNN (203 aa). An N6-acetyllysine modification is found at Lys-275.

The protein belongs to the sorting nexin family. In terms of assembly, forms heterodimers with BAR domain-containing sorting nexins SNX1 and SNX2; does not homodimerize. The heterodimers are proposed to self-assemble into helical arrays on the membrane to stabilize and expand local membrane curvature underlying endosomal tubule formation. Thought to be a component of the originally described retromer complex (also called SNX-BAR retromer) which is a pentamer containing the heterotrimeric retromer cargo-selective complex (CSC), also described as vacuolar protein sorting subcomplex (VPS), and a heterodimeric membrane-deforming subcomplex formed between SNX1 or SNX2 and SNX5 or SNX6 (also called SNX-BAR subcomplex); the respective CSC and SNX-BAR subcomplexes associate with low affinity. Interacts with SNX1, SNX2, VPS26A, VPS29, VPS35, DCTN1, DOCK1, MIB1, PIP5K1C. Interacts with HGS; increased by PIP5K1C kinase activity and by PtdIns(3P) and/or PtdIns(3,4)P2.

The protein resides in the endosome. It is found in the early endosome. Its subcellular location is the early endosome membrane. It localises to the cell membrane. The protein localises to the cytoplasmic vesicle membrane. The protein resides in the cytoplasm. It is found in the cell projection. Its subcellular location is the phagocytic cup. It localises to the ruffle. Its function is as follows. Involved in several stages of intracellular trafficking. Interacts with membranes containing phosphatidylinositol lipids. Acts in part as component of the retromer membrane-deforming SNX-BAR subcomplex. The SNX-BAR retromer mediates retrograde transport of cargo proteins from endosomes to the trans-Golgi network (TGN) and is involved in endosome-to-plasma membrane transport for cargo protein recycling. The SNX-BAR subcomplex functions to deform the donor membrane into a tubular profile called endosome-to-TGN transport carrier (ETC). Does not have in vitro vesicle-to-membrane remodeling activity. Involved in retrograde transport of lysosomal enzyme receptor IGF2R. May function as link between endosomal transport vesicles and dynactin. Plays a role in the internalization of EGFR after EGF stimulation. Involved in EGFR endosomal sorting and degradation; the function involves PIP5K1C and is retromer-independent. Together with PIP5K1C facilitates HGS interaction with ubiquitinated EGFR, which initiates EGFR sorting to intraluminal vesicles (ILVs) of the multivesicular body for subsequent lysosomal degradation. Involved in E-cadherin sorting and degradation; inhibits PIP5K1C-mediated E-cadherin degradation. Plays a role in macropinocytosis. In Bos taurus (Bovine), this protein is Sorting nexin-5 (SNX5).